The chain runs to 142 residues: Large-conductance mechanosensitive channel (142 aa).

The next 2 helical transmembrane spans lie at 10 to 30 (FAIK…AAFS) and 86 to 106 (GNFI…FLMV).

Belongs to the MscL family. As to quaternary structure, homopentamer.

It localises to the cell inner membrane. Functionally, channel that opens in response to stretch forces in the membrane lipid bilayer. May participate in the regulation of osmotic pressure changes within the cell. The protein is Large-conductance mechanosensitive channel of Polaromonas naphthalenivorans (strain CJ2).